The primary structure comprises 292 residues: Xanthine dehydrogenase FAD-binding subunit (292 aa).

An FAD-binding PCMH-type domain is found at 1-176; the sequence is MFDFASYHRA…VAFHFPPQPK (176 aa). Residues 27–34, 109–113, I165, and F184 contribute to the FAD site; these read KLLAGGTD and ATYGG.

As to quaternary structure, heterotrimer of XdhA, XdhB and XdhC. It depends on FAD as a cofactor.

It carries out the reaction xanthine + NAD(+) + H2O = urate + NADH + H(+). It catalyses the reaction hypoxanthine + NAD(+) + H2O = xanthine + NADH + H(+). It functions in the pathway purine metabolism; hypoxanthine degradation; urate from hypoxanthine: step 1/2. It participates in purine metabolism; hypoxanthine degradation; urate from hypoxanthine: step 2/2. In terms of biological role, presumed to be a dehydrogenase, but possibly an oxidase. Participates in limited purine salvage (requires aspartate) but does not support aerobic growth on purines as the sole carbon source (purine catabolism). The polypeptide is Xanthine dehydrogenase FAD-binding subunit (xdhB) (Escherichia coli O157:H7).